A 188-amino-acid chain; its full sequence is dTTP/UTP pyrophosphatase (188 aa).

Residue Asp-67 is the Proton acceptor of the active site.

Belongs to the Maf family. YhdE subfamily. A divalent metal cation serves as cofactor.

Its subcellular location is the cytoplasm. It carries out the reaction dTTP + H2O = dTMP + diphosphate + H(+). It catalyses the reaction UTP + H2O = UMP + diphosphate + H(+). Nucleoside triphosphate pyrophosphatase that hydrolyzes dTTP and UTP. May have a dual role in cell division arrest and in preventing the incorporation of modified nucleotides into cellular nucleic acids. The protein is dTTP/UTP pyrophosphatase of Roseobacter denitrificans (strain ATCC 33942 / OCh 114) (Erythrobacter sp. (strain OCh 114)).